The primary structure comprises 467 residues: Mitochondrial distribution and morphology protein 10 (467 aa).

Residues 361–393 (GLPDTAPSRNRECDDLPPPRRDNYHHQRSPHAS) form a disordered region. Over residues 369-385 (RNRECDDLPPPRRDNYH) the composition is skewed to basic and acidic residues.

It belongs to the MDM10 family. Component of the ER-mitochondria encounter structure (ERMES) or MDM complex, composed of MMM1, MDM10, MDM12 and MDM34. Associates with the mitochondrial outer membrane sorting assembly machinery SAM(core) complex.

The protein resides in the mitochondrion outer membrane. Its function is as follows. Component of the ERMES/MDM complex, which serves as a molecular tether to connect the endoplasmic reticulum and mitochondria. Components of this complex are involved in the control of mitochondrial shape and protein biogenesis and may function in phospholipid exchange. MDM10 is involved in the late assembly steps of the general translocase of the mitochondrial outer membrane (TOM complex). Functions in the TOM40-specific route of the assembly of outer membrane beta-barrel proteins, including the association of TOM40 with the receptor TOM22 and small TOM proteins. Can associate with the SAM(core) complex as well as the MDM12-MMM1 complex, both involved in late steps of the major beta-barrel assembly pathway, that is responsible for biogenesis of all outer membrane beta-barrel proteins. May act as a switch that shuttles between both complexes and channels precursor proteins into the TOM40-specific pathway. Plays a role in mitochondrial morphology and in the inheritance of mitochondria. The polypeptide is Mitochondrial distribution and morphology protein 10 (Ajellomyces capsulatus (strain NAm1 / WU24) (Darling's disease fungus)).